A 413-amino-acid chain; its full sequence is Mitochondrial carrier protein MTM1 (413 aa).

Solcar repeat units lie at residues 59–193 (IGFT…FRNR), 205–305 (MTFC…IKKR), and 318–406 (GVFG…VKYV). Transmembrane regions (helical) follow at residues 65–85 (VFSA…LDVV), 170–190 (NAGL…YDMF), 204–226 (AMTF…TVCY), 284–304 (QLAR…PIKK), 316–336 (LVGV…IAAA), and 378–399 (LFMG…VVSF).

It belongs to the mitochondrial carrier (TC 2.A.29) family. Ubiquitous.

It localises to the mitochondrion inner membrane. Involved in the mitochondrial activation of MSD1 by specifically facilitating insertion of the essential manganese cofactor. Has the ability to activate iron regulon in an iron-dependent manner. This is Mitochondrial carrier protein MTM1 (MTM1) from Arabidopsis thaliana (Mouse-ear cress).